The sequence spans 153 residues: Aspartate carbamoyltransferase regulatory chain (153 aa).

Zn(2+) contacts are provided by Cys-109, Cys-114, Cys-135, and Cys-138.

This sequence belongs to the PyrI family. Contains catalytic and regulatory chains. Zn(2+) serves as cofactor.

Functionally, involved in allosteric regulation of aspartate carbamoyltransferase. In Natronomonas pharaonis (strain ATCC 35678 / DSM 2160 / CIP 103997 / JCM 8858 / NBRC 14720 / NCIMB 2260 / Gabara) (Halobacterium pharaonis), this protein is Aspartate carbamoyltransferase regulatory chain.